We begin with the raw amino-acid sequence, 277 residues long: Undecaprenyl-diphosphatase (277 aa).

Helical transmembrane passes span 47-67, 85-105, 108-128, 183-203, 218-238, and 249-269; these read FNII…RGKI, VNLL…ADLI, WLFN…IMLW, AATE…AVYS, VFAV…RALL, and FAWY…FHLI.

The protein belongs to the UppP family.

It localises to the cell inner membrane. It carries out the reaction di-trans,octa-cis-undecaprenyl diphosphate + H2O = di-trans,octa-cis-undecaprenyl phosphate + phosphate + H(+). In terms of biological role, catalyzes the dephosphorylation of undecaprenyl diphosphate (UPP). Confers resistance to bacitracin. The chain is Undecaprenyl-diphosphatase from Pseudomonas paraeruginosa (strain DSM 24068 / PA7) (Pseudomonas aeruginosa (strain PA7)).